Consider the following 242-residue polypeptide: Lysosomal membrane ascorbate-dependent ferrireductase CYB561A3 (242 aa).

The Cytoplasmic portion of the chain corresponds to 1–7 (MVSGRFY). A helical transmembrane segment spans residues 8 to 28 (LSCLLLGSLGSMCILFTIYWM). In terms of domain architecture, Cytochrome b561 spans 12–219 (LLGSLGSMCI…FGLLVLYILL (208 aa)). Residues 29–45 (QYWRGGFAWNGSIYMFN) lie on the Lumenal side of the membrane. Asn38 is a glycosylation site (N-linked (GlcNAc...) asparagine). The helical transmembrane segment at 46–66 (WHPVLMVAGMVVFYGGASLVY) threads the bilayer. Heme b-binding residues include His47 and Arg67. At 67–83 (RLPQSWVGPKLPWKLLH) the chain is on the cytoplasmic side. The L-ascorbate site is built by Lys76 and Lys80. Heme b is bound at residue His83. A helical transmembrane segment spans residues 84-104 (AALHLMAFVLTVVGLVAVFTF). The Lumenal segment spans residues 105 to 119 (HNHGRTANLYSLHSW). Residues 112–115 (NLYS) and His117 each bind heme b. The chain crosses the membrane as a helical span at residues 120 to 140 (LGITTVFLFACQWFLGFAVFL). Residues 141-154 (LPWASMWLRSLLKP) are Cytoplasmic-facing. Arg149 is an L-ascorbate binding site. The helical transmembrane segment at 155 to 175 (IHVFFGAAILSLSIASVISGI) threads the bilayer. 2 residues coordinate heme b: His156 and Glu177. The Lumenal portion of the chain corresponds to 176-202 (NEKLFFSLKNTTRPYHSLPSEAVFANS). Residues 203–223 (TGMLVVAFGLLVLYILLASSW) form a helical membrane-spanning segment. Residue Lys224 participates in heme b binding. The Cytoplasmic portion of the chain corresponds to 224–242 (KRPEPGILTDRQPLLHDGE).

Homodimer. Heme b serves as cofactor. Post-translationally, N-glycosylated.

It is found in the late endosome membrane. It localises to the lysosome membrane. The enzyme catalyses Fe(3+)(out) + L-ascorbate(in) = monodehydro-L-ascorbate radical(in) + Fe(2+)(out) + H(+). Functionally, transmembrane reductase that uses ascorbate as an electron donor in the cytoplasm and transfers electrons across membranes to reduce iron cations Fe(3+) into Fe(2+) in the lumen of the late endosome and lysosome. Reduced iron can then be extruded from the late endosome and lysosome to the cytoplasm by divalent metal-specific transporters. It is therefore most probably involved in endosomal and lysosomal cellular iron homeostasis. In Homo sapiens (Human), this protein is Lysosomal membrane ascorbate-dependent ferrireductase CYB561A3.